A 270-amino-acid polypeptide reads, in one-letter code: Endochitinase PR4 (270 aa).

An N-terminal signal peptide occupies residues 1–23 (MGNKLVLVLVAVALVMGPKNVSA). Positions 24–58 (QNCGCAEGLCCSQYGYCGTGEDYCGTGCQQGPCTT) constitute a Chitin-binding type-1 domain. 7 disulfides stabilise this stretch: C26-C34, C28-C40, C33-C47, C51-C56, C88-C137, C150-C160, and C238-C270. The active-site Proton donor is E132.

The protein belongs to the glycosyl hydrolase 19 family. Chitinase class I subfamily.

It carries out the reaction Random endo-hydrolysis of N-acetyl-beta-D-glucosaminide (1-&gt;4)-beta-linkages in chitin and chitodextrins.. Functionally, defense against chitin-containing fungal pathogens. This chain is Endochitinase PR4 (CHI4), found in Phaseolus vulgaris (Kidney bean).